The chain runs to 469 residues: Glutamine synthetase (469 aa).

Residues 15-96 (NDVKFIDVRF…INFFIHDPIT (82 aa)) form the GS beta-grasp domain. The 366-residue stretch at 104–469 (PRNIAKKAEA…PHEFELYFDI (366 aa)) folds into the GS catalytic domain. Mg(2+) is bound by residues Glu-129 and Glu-131. ATP is bound at residue Glu-205. Residues Glu-210 and Glu-218 each coordinate Mg(2+). Residue 221–223 (YKF) participates in ATP binding. L-glutamate-binding positions include 262 to 263 (NG) and Gly-263. Mg(2+) is bound at residue His-267. Residues 269–271 (HQS) and Ser-271 contribute to the ATP site. Arg-320, Glu-326, and Arg-338 together coordinate L-glutamate. ATP is bound by residues Arg-338, Arg-343, and Lys-352. Glu-357 contacts Mg(2+). Arg-359 contributes to the L-glutamate binding site. Tyr-397 is modified (O-AMP-tyrosine).

The protein belongs to the glutamine synthetase family. Oligomer of 12 subunits arranged in the form of two hexagons. The cofactor is Mg(2+).

The protein localises to the cytoplasm. The catalysed reaction is L-glutamate + NH4(+) + ATP = L-glutamine + ADP + phosphate + H(+). The activity of this enzyme could be controlled by adenylation under conditions of abundant glutamine. Catalyzes the ATP-dependent biosynthesis of glutamine from glutamate and ammonia. The protein is Glutamine synthetase of Streptomyces filamentosus (Streptomyces roseosporus).